A 107-amino-acid polypeptide reads, in one-letter code: Iron-sulfur cluster assembly protein CyaY (107 aa).

This sequence belongs to the frataxin family.

Involved in iron-sulfur (Fe-S) cluster assembly. May act as a regulator of Fe-S biogenesis. The polypeptide is Iron-sulfur cluster assembly protein CyaY (Neisseria gonorrhoeae (strain ATCC 700825 / FA 1090)).